Reading from the N-terminus, the 251-residue chain is Intermembrane phospholipid transport system lipoprotein MlaA (251 aa).

The N-terminal stretch at 1-17 is a signal peptide; sequence MKLRLSALALGTTLLVG. Cysteine 18 carries N-palmitoyl cysteine lipidation. A lipid anchor (S-diacylglycerol cysteine) is attached at cysteine 18. A disordered region spans residues 228 to 251; it reads GELKPQENPNAQAIQDDLKDIDSE.

This sequence belongs to the MlaA family.

Its subcellular location is the cell outer membrane. Functionally, involved in a phospholipid transport pathway that maintains lipid asymmetry in the outer membrane by retrograde trafficking of phospholipids from the outer membrane to the inner membrane. Required for intercellular spreading of S.flexneri. The polypeptide is Intermembrane phospholipid transport system lipoprotein MlaA (Shigella flexneri).